We begin with the raw amino-acid sequence, 627 residues long: uncharacterized protein (627 aa).

Disordered regions lie at residues 141–187 (LRYP…TPPS) and 490–510 (ENEN…GPRT). Over residues 491–510 (NENTNGSANNSTYTNGGPRT) the composition is skewed to polar residues. At S559 the chain carries Phosphoserine.

This is an uncharacterized protein from Saccharomyces cerevisiae (strain ATCC 204508 / S288c) (Baker's yeast).